We begin with the raw amino-acid sequence, 731 residues long: Autophagy-related protein 20 (731 aa).

The segment covering 1–22 has biased composition (polar residues); it reads MSSVLRNQDNPPTISEVSSTTK. The interval 1–130 is disordered; sequence MSSVLRNQDN…NNKSNNVSRV (130 aa). Basic and acidic residues predominate over residues 31–41; sequence KQEEKEKEKEI. Polar residues predominate over residues 69–82; that stretch reads SFMTANSFNEGPNT. Composition is skewed to low complexity over residues 92-102 and 113-128; these read NNNSSSNNNRG and LLLY…NNVS. Residues 164–340 form the PX domain; sequence IQITEAGNSN…KFLDPNANWG (177 aa). Positions 205, 207, and 231 each coordinate a 1,2-diacyl-sn-glycero-3-phospho-(1D-myo-inositol-3-phosphate). The segment at 253 to 277 is disordered; it reads SVAGSNGNSGGSGGGGASGGAGSGS. The span at 259–277 shows a compositional bias: gly residues; it reads GNSGGSGGGGASGGAGSGS. A 1,2-diacyl-sn-glycero-3-phospho-(1D-myo-inositol-3-phosphate) is bound at residue arginine 306. The disordered stretch occupies residues 586–626; sequence NSQVKPKNGKYNLEQQQSSTVSPAPPPGPPPSSSSSSSSSS. Residues 608-617 show a composition bias toward pro residues; sequence PAPPPGPPPS.

The protein belongs to the sorting nexin family.

The protein localises to the endosome membrane. Its subcellular location is the preautophagosomal structure membrane. Functionally, required for cytoplasm to vacuole transport (Cvt), pexophagy and mitophagy. Also involved in endoplasmic reticulum-specific autophagic process and is essential for the survival of cells subjected to severe ER stress. Functions in protein retrieval from the endocytic pathway. The polypeptide is Autophagy-related protein 20 (ATG20) (Candida albicans (strain SC5314 / ATCC MYA-2876) (Yeast)).